Here is a 215-residue protein sequence, read N- to C-terminus: Probable phosphoglycerate mutase GpmB (215 aa).

Substrate is bound by residues 8-15, 21-22, Arg-58, Arg-60, 82-85, and 151-152; these read RHGESEWN, QG, ELHM, and GI. The active-site Tele-phosphohistidine intermediate is His-9. Catalysis depends on Glu-82, which acts as the Proton donor/acceptor.

It belongs to the phosphoglycerate mutase family. GpmB subfamily.

It carries out the reaction (2R)-2-phosphoglycerate = (2R)-3-phosphoglycerate. It functions in the pathway carbohydrate degradation; glycolysis; pyruvate from D-glyceraldehyde 3-phosphate: step 3/5. The protein is Probable phosphoglycerate mutase GpmB of Photorhabdus laumondii subsp. laumondii (strain DSM 15139 / CIP 105565 / TT01) (Photorhabdus luminescens subsp. laumondii).